The chain runs to 762 residues: 5-methyltetrahydropteroyltriglutamate--homocysteine methyltransferase (762 aa).

Residues 17 to 20 and Lys-111 each bind 5-methyltetrahydropteroyltri-L-glutamate; that span reads REWK. L-homocysteine contacts are provided by residues 435 to 437 and Glu-488; that span reads IGS. L-methionine-binding positions include 435-437 and Glu-488; that span reads IGS. Residues 519–520 and Trp-565 contribute to the 5-methyltetrahydropteroyltri-L-glutamate site; that span reads RC. Asp-603 is a binding site for L-homocysteine. Asp-603 lines the L-methionine pocket. Glu-609 lines the 5-methyltetrahydropteroyltri-L-glutamate pocket. The Zn(2+) site is built by His-645, Cys-647, and Glu-669. His-698 serves as the catalytic Proton donor. A Zn(2+)-binding site is contributed by Cys-730.

It belongs to the vitamin-B12 independent methionine synthase family. It depends on Zn(2+) as a cofactor.

The enzyme catalyses 5-methyltetrahydropteroyltri-L-glutamate + L-homocysteine = tetrahydropteroyltri-L-glutamate + L-methionine. It functions in the pathway amino-acid biosynthesis; L-methionine biosynthesis via de novo pathway; L-methionine from L-homocysteine (MetE route): step 1/1. In terms of biological role, catalyzes the transfer of a methyl group from 5-methyltetrahydrofolate to homocysteine resulting in methionine formation. In Bacillus cytotoxicus (strain DSM 22905 / CIP 110041 / 391-98 / NVH 391-98), this protein is 5-methyltetrahydropteroyltriglutamate--homocysteine methyltransferase.